A 271-amino-acid polypeptide reads, in one-letter code: (+)-cis,trans-nepetalactol synthase NEPS1 (271 aa).

Residues 24-30 (GGASGIG), 49-51 (DIQ), 72-73 (DV), and Asn-99 contribute to the NAD(+) site. Positions 154 and 167 each coordinate substrate. Residues Tyr-167, Lys-171, and 200-205 (VLTPLA) contribute to the NAD(+) site. Catalysis depends on Tyr-167, which acts as the Proton acceptor.

This sequence belongs to the short-chain dehydrogenases/reductases (SDR) family.

The enzyme catalyses (S)-8-oxocitronellyl enol = cis-trans-nepetalactol. It catalyses the reaction cis-cis-nepetalactol + NAD(+) = cis-cis-nepetalactone + NADH + H(+). The catalysed reaction is cis-trans-nepetalactol + NAD(+) = cis-trans-nepetalactone + NADH + H(+). Bifunctional enzyme that possesses cyclase and dehydrogenase activities. Functions as a non-oxidoreductive cyclase to promote the formation of cis-trans-nepetalactol. Functions as dehydrogenase to oxidize cis-cis-nepetalactol and cis-trans-nepetalactol into nepetalactones, metabolites that are both insect-repellent and have euphoric effect in cats. Binds NAD(+) as classical short-chain dehydrogenase/reductase (SDR), but does not utilize it for its redox-neutral cyclase activity. In Nepeta racemosa (Catmint), this protein is (+)-cis,trans-nepetalactol synthase NEPS1.